Here is a 396-residue protein sequence, read N- to C-terminus: Putative F-box protein At4g22660 (396 aa).

The F-box domain occupies 7–58 (PNTWSDLPLDLLNLVFKRLSFANFRQAKSVCSSWYSASKQSVPKNQIPWLML).

This chain is Putative F-box protein At4g22660, found in Arabidopsis thaliana (Mouse-ear cress).